An 894-amino-acid chain; its full sequence is Alpha-actinin-2 (894 aa).

An actin-binding region spans residues 1–254 (MNQIEPGVQY…IMTYVSCFYH (254 aa)). Calponin-homology (CH) domains lie at 38-142 (KQQR…LRFA) and 151-257 (TSAK…HAFA). Thr-237 carries the post-translational modification Phosphothreonine. Spectrin repeat units lie at residues 281–391 (RLME…WLLN), 401–506 (HLAE…ALER), 516–627 (QLHL…SLQE), and 637–740 (RLRR…EVET). EF-hand domains lie at 753 to 788 (EQMNEFRASFNHFDRRKNGLMDHEDFRACLISMGYD) and 789 to 824 (LGEAEFARIMTLVDPNGQGTVTFQSFIDFMTRETAD). Residues Asp-766, Asn-770, Asp-777, Asp-802, Asn-804, and Thr-808 each coordinate Ca(2+).

The protein belongs to the alpha-actinin family. Homodimer; antiparallel. Also forms heterodimers with ACTN3. Interacts with ADAM12, MYOZ1, MYOZ2 and MYOZ3. Interacts via its C-terminal region with the LDB3 PDZ domain. Interacts with XIRP2. Interacts with DST isoform 1 (via N-terminus). Interacts with PARVB. Interacts with SYNPO2. Post-translationally, ubiquitinated by FBXL22, leading to proteasomal degradation. Expressed in both skeletal and cardiac muscle.

The protein localises to the cytoplasm. Its subcellular location is the myofibril. It is found in the sarcomere. The protein resides in the z line. F-actin cross-linking protein which is thought to anchor actin to a variety of intracellular structures. This is a bundling protein. The sequence is that of Alpha-actinin-2 (ACTN2) from Homo sapiens (Human).